The following is a 477-amino-acid chain: Histone-lysine N-methyltransferase SUV39H2 (477 aa).

The interval 1–59 is disordered; it reads MATARAKARGSEAGARCHRAPGPPPRPKARRTARRRRAETLTARRSRPSAGERRAGSQR. Over residues 27-37 the composition is skewed to basic residues; the sequence is PKARRTARRRR. The region spanning 118 to 176 is the Chromo domain; it reads YEVEYLCDYKVAKGVEYYLVKWKGWPDSTNTWEPLRNLRCPQLLRQFSDDKKTYLAQER. The region spanning 256 to 314 is the Pre-SET domain; sequence FGCSCTDCFFDKCCPAEAGVVLAYNKKQQIKIQPGTPIYECNSRCRCGPECPNRIVQKG. Residues C258, C260, C263, C268, C269, C296, C300, C302, and C306 each coordinate Zn(2+). Positions 317-440 constitute an SET domain; sequence YSLCIFKTSN…AGEELTFDYQ (124 aa). Residues 328-330, Y371, and 397-398 contribute to the S-adenosyl-L-methionine site; these read CGW and NH. Residue C400 participates in Zn(2+) binding. S448, S451, and S455 each carry phosphoserine. One can recognise a Post-SET domain in the interval 461 to 477; the sequence is VRTQCKCGAETCRGYLN. Zn(2+)-binding residues include C465, C467, and C472.

This sequence belongs to the class V-like SAM-binding methyltransferase superfamily. Histone-lysine methyltransferase family. Suvar3-9 subfamily. As to quaternary structure, interacts with SMAD5. The large PER complex involved in the histone methylation is composed of at least PER2, CBX3, TRIM28, SUV39H1 and/or SUV39H2; CBX3 mediates the formation of the complex. Ubiquitinated by the DCX(DCAF13) E3 ubiquitin ligase complex, leading to its degradation. Testis specific; predominant expression in type B spermatogonia and preleptotene spermatocytes.

The protein resides in the nucleus. Its subcellular location is the chromosome. It localises to the centromere. It catalyses the reaction L-lysyl(9)-[histone H3] + 3 S-adenosyl-L-methionine = N(6),N(6),N(6)-trimethyl-L-lysyl(9)-[histone H3] + 3 S-adenosyl-L-homocysteine + 3 H(+). Functionally, histone methyltransferase that specifically trimethylates 'Lys-9' of histone H3 using monomethylated H3 'Lys-9' as substrate. H3 'Lys-9' trimethylation represents a specific tag for epigenetic transcriptional repression by recruiting HP1 (CBX1, CBX3 and/or CBX5) proteins to methylated histones. Mainly functions in heterochromatin regions, thereby playing a central role in the establishment of constitutive heterochromatin at pericentric and telomere regions. H3 'Lys-9' trimethylation is also required to direct DNA methylation at pericentric repeats. SUV39H1 is targeted to histone H3 via its interaction with RB1 and is involved in many processes, such as cell cycle regulation, transcriptional repression and regulation of telomere length. May participate in regulation of higher-order chromatin organization during spermatogenesis. Recruited by the large PER complex to the E-box elements of the circadian target genes such as PER2 itself or PER1, contributes to the conversion of local chromatin to a heterochromatin-like repressive state through H3 'Lys-9' trimethylation. This is Histone-lysine N-methyltransferase SUV39H2 (Suv39h2) from Mus musculus (Mouse).